We begin with the raw amino-acid sequence, 390 residues long: Putative gustatory receptor 36c (390 aa).

Over 1–4 (MDLE) the chain is Cytoplasmic. The helical transmembrane segment at 5–25 (SFLLGAVYYYGLFIGLSNFEF) threads the bilayer. Residues 26–36 (DWNTGRVFTKK) are Extracellular-facing. Residues 37–57 (WSTLYAIALDSCIFALYIYHW) form a helical membrane-spanning segment. The Cytoplasmic portion of the chain corresponds to 58–75 (TGNTNIVNAIFGRANMLH). Residues 76 to 96 (EYVVAILTGLRIVTGLFTLIL) traverse the membrane as a helical segment. Over 97 to 132 (RWYQRCKMMDLASKVVRMYVARPQVRRMSRWGILTK) the chain is Extracellular. The helical transmembrane segment at 133-153 (FIFGSITDGLQMAMVLSAMGS) threads the bilayer. The Cytoplasmic portion of the chain corresponds to 154–165 (VDSQFYLGLGLQ). The helical transmembrane segment at 166–186 (YWMFVILNMAMMQQHMIMLFV) threads the bilayer. Residues 187-254 (RTQFQLINTE…MEEVFGIQGA (68 aa)) are Extracellular-facing. Residues 255 to 275 (MTYGGYYLSSVGTCYLAYSIL) traverse the membrane as a helical segment. Residues 276–288 (KHGYENLSMTLST) lie on the Cytoplasmic side of the membrane. A helical transmembrane segment spans residues 289 to 309 (VILAYSWCFFYYLDGMLNLSV). The Extracellular portion of the chain corresponds to 310–390 (MLHVQDDYWE…FLIQYDIEHF (81 aa)).

The protein belongs to the insect chemoreceptor superfamily. Gustatory receptor (GR) family. Gr22e subfamily. In terms of tissue distribution, expressed in neurons of the terminal external chemosensory organ of larvae.

Its subcellular location is the cell membrane. Functionally, probable gustatory receptor which mediates acceptance or avoidance behavior, depending on its substrates. This is Putative gustatory receptor 36c (Gr36c) from Drosophila melanogaster (Fruit fly).